The following is an 87-amino-acid chain: Small ribosomal subunit protein uS17 (87 aa).

It belongs to the universal ribosomal protein uS17 family. As to quaternary structure, part of the 30S ribosomal subunit.

In terms of biological role, one of the primary rRNA binding proteins, it binds specifically to the 5'-end of 16S ribosomal RNA. This Hydrogenovibrio crunogenus (strain DSM 25203 / XCL-2) (Thiomicrospira crunogena) protein is Small ribosomal subunit protein uS17.